The chain runs to 142 residues: Putative pre-16S rRNA nuclease (142 aa).

The protein belongs to the YqgF nuclease family.

It is found in the cytoplasm. Functionally, could be a nuclease involved in processing of the 5'-end of pre-16S rRNA. This chain is Putative pre-16S rRNA nuclease, found in Lawsonia intracellularis (strain PHE/MN1-00).